The sequence spans 276 residues: Rhamnulose-1-phosphate aldolase (276 aa).

The active site involves Glu-117. Zn(2+)-binding residues include His-141, His-143, and His-212.

It belongs to the aldolase class II family. RhaD subfamily. Homotetramer. It depends on Zn(2+) as a cofactor.

It localises to the cytoplasm. It carries out the reaction L-rhamnulose 1-phosphate = (S)-lactaldehyde + dihydroxyacetone phosphate. The protein operates within carbohydrate degradation; L-rhamnose degradation; glycerone phosphate from L-rhamnose: step 3/3. Its function is as follows. Catalyzes the reversible cleavage of L-rhamnulose-1-phosphate to dihydroxyacetone phosphate (DHAP) and L-lactaldehyde. The polypeptide is Rhamnulose-1-phosphate aldolase (Klebsiella pneumoniae subsp. pneumoniae (strain ATCC 700721 / MGH 78578)).